The following is a 152-amino-acid chain: Small ribosomal subunit protein uS11 (152 aa).

Residues valine 133–leucine 152 form a disordered region. The span at arginine 143–leucine 152 shows a compositional bias: basic residues.

This sequence belongs to the universal ribosomal protein uS11 family. As to quaternary structure, component of the small ribosomal subunit. Part of the small subunit (SSU) processome, composed of more than 70 proteins and the RNA chaperone small nucleolar RNA (snoRNA) U3.

It localises to the cytoplasm. The protein localises to the nucleus. It is found in the nucleolus. Functionally, component of the small ribosomal subunit. The ribosome is a large ribonucleoprotein complex responsible for the synthesis of proteins in the cell. Part of the small subunit (SSU) processome, first precursor of the small eukaryotic ribosomal subunit. During the assembly of the SSU processome in the nucleolus, many ribosome biogenesis factors, an RNA chaperone and ribosomal proteins associate with the nascent pre-rRNA and work in concert to generate RNA folding, modifications, rearrangements and cleavage as well as targeted degradation of pre-ribosomal RNA by the RNA exosome. The protein is Small ribosomal subunit protein uS11 (rps14) of Dictyostelium discoideum (Social amoeba).